The primary structure comprises 667 residues: Protein-glutamine gamma-glutamyltransferase 4 (667 aa).

N-linked (GlcNAc...) asparagine glycosylation is found at N151, N220, and N227. Residues C256, H315, and D338 contribute to the active site. Residues N378 and D380 each coordinate Ca(2+). N408 carries N-linked (GlcNAc...) asparagine glycosylation. Ca(2+)-binding residues include E430 and E435. The tract at residues 430–449 (EGSPEERKAMEKASGKRPDD) is disordered. 2 N-linked (GlcNAc...) asparagine glycosylation sites follow: N472 and N488.

The protein belongs to the transglutaminase superfamily. Transglutaminase family. In terms of assembly, homodimer. The cofactor is Ca(2+). The N-terminus is blocked. In terms of processing, probably linked to the cell membrane via a lipid-anchor, possibly a GPI-anchor. Post-translationally, N-glycosylated on 2 Asn residues by a high mannose oligosaccharide consisting of five mannose residues and a fucosylated biantennary complex glycan. As to expression, expressed in the coagulating gland, the dorsal part of the prostate and in semen (at protein level). Expressed at low levels in the lateral prostate and seminal vesicle. Not expressed in the epididymis, kidney, liver, serum, sperm plug, testes and ventral prostate.

Its subcellular location is the secreted. It localises to the cell membrane. The catalysed reaction is L-glutaminyl-[protein] + L-lysyl-[protein] = [protein]-L-lysyl-N(6)-5-L-glutamyl-[protein] + NH4(+). Functionally, associated with the mammalian reproductive process. Plays an important role in the formation of the seminal coagulum through the cross-linking of specific proteins present in the seminal plasma. Transglutaminase is also required to stabilize the copulatory plug. This chain is Protein-glutamine gamma-glutamyltransferase 4 (Tgm4), found in Rattus norvegicus (Rat).